Reading from the N-terminus, the 217-residue chain is Large ribosomal subunit protein uL3 (217 aa).

Belongs to the universal ribosomal protein uL3 family. Part of the 50S ribosomal subunit. Forms a cluster with proteins L14 and L19.

One of the primary rRNA binding proteins, it binds directly near the 3'-end of the 23S rRNA, where it nucleates assembly of the 50S subunit. The sequence is that of Large ribosomal subunit protein uL3 from Mycolicibacterium paratuberculosis (strain ATCC BAA-968 / K-10) (Mycobacterium paratuberculosis).